The sequence spans 305 residues: Aspartate carbamoyltransferase catalytic subunit (305 aa).

Arginine 56 and threonine 57 together coordinate carbamoyl phosphate. Lysine 84 serves as a coordination point for L-aspartate. Carbamoyl phosphate contacts are provided by arginine 106, histidine 136, and glutamine 139. L-aspartate contacts are provided by arginine 169 and arginine 221. 2 residues coordinate carbamoyl phosphate: alanine 262 and proline 263.

It belongs to the aspartate/ornithine carbamoyltransferase superfamily. ATCase family. Heterododecamer (2C3:3R2) of six catalytic PyrB chains organized as two trimers (C3), and six regulatory PyrI chains organized as three dimers (R2).

It carries out the reaction carbamoyl phosphate + L-aspartate = N-carbamoyl-L-aspartate + phosphate + H(+). It functions in the pathway pyrimidine metabolism; UMP biosynthesis via de novo pathway; (S)-dihydroorotate from bicarbonate: step 2/3. Its function is as follows. Catalyzes the condensation of carbamoyl phosphate and aspartate to form carbamoyl aspartate and inorganic phosphate, the committed step in the de novo pyrimidine nucleotide biosynthesis pathway. The chain is Aspartate carbamoyltransferase catalytic subunit from Streptococcus sanguinis (strain SK36).